Reading from the N-terminus, the 262-residue chain is MSEQEVTYSMVRFHKSAGLQKQVRPEETKGPREAGYRRCSFHWKFIVIALGIFCFLLLVAVSVLAIKIFQYDQQKNCEEFLNHHNNCSNMQSDINLKDEMLKNKSIECDLLESLNRDQNRLYNKTKTVLDSLQHTGRGDKVYWFCYGMKCYYFVMDRKTWSGCKQACQSSSLSLLKIDDEDELKFLQLVVPSDSCWVGLSYDNKKKDWAWIDNRPSKLALNTGKYNIRDGGCMLLSKTRLDNGNCDQVFICICGKRLDKFPH.

The Cytoplasmic portion of the chain corresponds to 1–44 (MSEQEVTYSMVRFHKSAGLQKQVRPEETKGPREAGYRRCSFHWK). Residues 45 to 66 (FIVIALGIFCFLLLVAVSVLAI) traverse the membrane as a helical; Signal-anchor for type II membrane protein segment. Over 67–262 (KIFQYDQQKN…CGKRLDKFPH (196 aa)) the chain is Extracellular. N-linked (GlcNAc...) asparagine glycans are attached at residues Asn-86, Asn-103, and Asn-123. Positions 137–139 (RGD) match the Cell attachment site motif. The C-type lectin domain maps to 138–257 (GDKVYWFCYG…VFICICGKRL (120 aa)). Intrachain disulfides connect Cys-145–Cys-150, Cys-163–Cys-251, Cys-167–Cys-253, and Cys-232–Cys-245.

Homodimer; disulfide-linked. As to expression, high, in T-lymphoma lines, very low in normal lymphocytes.

The protein localises to the membrane. Receptor on natural killer (NK) cells for H-2d alleles. Inhibits the activity of NK cells thus preventing cell lysis. In Mus musculus (Mouse), this protein is T-cell surface glycoprotein YE1/48 (Klra1).